Here is a 351-residue protein sequence, read N- to C-terminus: uncharacterized protein (351 aa).

The signal sequence occupies residues 1 to 27; that stretch reads MKNKKRVLIASSLSCAILLLSAATTQA. A disordered region spans residues 28–71; it reads NSAHKDSQDQNKKEHVDKSQQKDKRNVTNKDKNSTVPDDIGKNG. Residues 30-60 are compositionally biased toward basic and acidic residues; that stretch reads AHKDSQDQNKKEHVDKSQQKDKRNVTNKDKN.

This sequence belongs to the aerolysin family.

This is an uncharacterized protein from Staphylococcus aureus (strain N315).